The primary structure comprises 130 residues: Small ribosomal subunit protein uS11 (130 aa).

It belongs to the universal ribosomal protein uS11 family. Part of the 30S ribosomal subunit. Interacts with proteins S7 and S18. Binds to IF-3.

Its function is as follows. Located on the platform of the 30S subunit, it bridges several disparate RNA helices of the 16S rRNA. Forms part of the Shine-Dalgarno cleft in the 70S ribosome. This is Small ribosomal subunit protein uS11 from Synechococcus sp. (strain WH7803).